Consider the following 185-residue polypeptide: Ribosome-recycling factor (185 aa).

It belongs to the RRF family.

The protein resides in the cytoplasm. Functionally, responsible for the release of ribosomes from messenger RNA at the termination of protein biosynthesis. May increase the efficiency of translation by recycling ribosomes from one round of translation to another. The chain is Ribosome-recycling factor from Haemophilus influenzae (strain ATCC 51907 / DSM 11121 / KW20 / Rd).